Here is a 354-residue protein sequence, read N- to C-terminus: 4-hydroxy-3-methylbut-2-en-1-yl diphosphate synthase (flavodoxin) (354 aa).

Residues Cys263, Cys266, Cys298, and Glu305 each coordinate [4Fe-4S] cluster.

It belongs to the IspG family. It depends on [4Fe-4S] cluster as a cofactor.

The catalysed reaction is (2E)-4-hydroxy-3-methylbut-2-enyl diphosphate + oxidized [flavodoxin] + H2O + 2 H(+) = 2-C-methyl-D-erythritol 2,4-cyclic diphosphate + reduced [flavodoxin]. Its pathway is isoprenoid biosynthesis; isopentenyl diphosphate biosynthesis via DXP pathway; isopentenyl diphosphate from 1-deoxy-D-xylulose 5-phosphate: step 5/6. Its function is as follows. Converts 2C-methyl-D-erythritol 2,4-cyclodiphosphate (ME-2,4cPP) into 1-hydroxy-2-methyl-2-(E)-butenyl 4-diphosphate. This is 4-hydroxy-3-methylbut-2-en-1-yl diphosphate synthase (flavodoxin) from Fusobacterium nucleatum subsp. nucleatum (strain ATCC 25586 / DSM 15643 / BCRC 10681 / CIP 101130 / JCM 8532 / KCTC 2640 / LMG 13131 / VPI 4355).